We begin with the raw amino-acid sequence, 394 residues long: Elongation factor Tu (394 aa).

The tr-type G domain maps to 10–204; that stretch reads KPHVNVGTIG…ALDTYIPEPE (195 aa). Positions 19–26 are G1; sequence GHVDHGKT. 19-26 serves as a coordination point for GTP; it reads GHVDHGKT. Thr-26 is a binding site for Mg(2+). Positions 60–64 are G2; that stretch reads GITIN. The tract at residues 81–84 is G3; it reads DCPG. GTP contacts are provided by residues 81-85 and 136-139; these read DCPGH and NKCD. The tract at residues 136–139 is G4; it reads NKCD. The segment at 174-176 is G5; it reads SAL.

It belongs to the TRAFAC class translation factor GTPase superfamily. Classic translation factor GTPase family. EF-Tu/EF-1A subfamily. Monomer.

It localises to the cytoplasm. The enzyme catalyses GTP + H2O = GDP + phosphate + H(+). GTP hydrolase that promotes the GTP-dependent binding of aminoacyl-tRNA to the A-site of ribosomes during protein biosynthesis. The chain is Elongation factor Tu from Colwellia psychrerythraea (strain 34H / ATCC BAA-681) (Vibrio psychroerythus).